A 363-amino-acid chain; its full sequence is Sulfate/thiosulfate import ATP-binding protein CysA (363 aa).

Residues 3–237 (IEINNISKYF…PATRFVLEFL (235 aa)) enclose the ABC transporter domain. 35–42 (GPSGSGKT) serves as a coordination point for ATP.

The protein belongs to the ABC transporter superfamily. Sulfate/tungstate importer (TC 3.A.1.6) family. In terms of assembly, the complex is composed of two ATP-binding proteins (CysA), two transmembrane proteins (CysT and CysW) and a solute-binding protein (CysP).

It localises to the cell inner membrane. It catalyses the reaction sulfate(out) + ATP + H2O = sulfate(in) + ADP + phosphate + H(+). The catalysed reaction is thiosulfate(out) + ATP + H2O = thiosulfate(in) + ADP + phosphate + H(+). Its function is as follows. Part of the ABC transporter complex CysAWTP involved in sulfate/thiosulfate import. Responsible for energy coupling to the transport system. This chain is Sulfate/thiosulfate import ATP-binding protein CysA, found in Yersinia pseudotuberculosis serotype I (strain IP32953).